A 310-amino-acid polypeptide reads, in one-letter code: tRNA uridine(34) hydroxylase (310 aa).

Residues 124-218 (SDPEVLLIDT…YFEEVPQEES (95 aa)) enclose the Rhodanese domain. The Cysteine persulfide intermediate role is filled by C178.

This sequence belongs to the TrhO family.

It catalyses the reaction uridine(34) in tRNA + AH2 + O2 = 5-hydroxyuridine(34) in tRNA + A + H2O. In terms of biological role, catalyzes oxygen-dependent 5-hydroxyuridine (ho5U) modification at position 34 in tRNAs. This Pseudomonas putida (strain GB-1) protein is tRNA uridine(34) hydroxylase.